The primary structure comprises 192 residues: Elongation factor P (192 aa).

This sequence belongs to the elongation factor P family.

Its subcellular location is the cytoplasm. Its pathway is protein biosynthesis; polypeptide chain elongation. Involved in peptide bond synthesis. Stimulates efficient translation and peptide-bond synthesis on native or reconstituted 70S ribosomes in vitro. Probably functions indirectly by altering the affinity of the ribosome for aminoacyl-tRNA, thus increasing their reactivity as acceptors for peptidyl transferase. This chain is Elongation factor P, found in Borrelia duttonii (strain Ly).